The sequence spans 1330 residues: ESX-3 secretion system protein EccC3 (1330 aa).

The next 2 helical transmembrane spans lie at 43 to 63 (LPYL…ATGM) and 65 to 85 (VISP…TALY). 3 FtsK domains span residues 456–662 (GEPL…SVSR), 811–1000 (RDPL…RDSN), and 1090–1280 (LAPV…ADSG). Residues 479-486 (GMTGSGKS), 829-836 (GGPKSGKS), and 1107-1114 (GDARSGKT) each bind ATP.

In terms of assembly, part of the ESX-3 / type VII secretion system (T7SS), which is composed of cytosolic and membrane components. The ESX-3 membrane complex is composed of EccB3, EccC3, EccD3 and EccE3.

Its subcellular location is the cell inner membrane. Part of the ESX-3 specialized secretion system, which is important for iron and zinc uptake or homeostasis. This is ESX-3 secretion system protein EccC3 from Mycobacterium tuberculosis (strain ATCC 25618 / H37Rv).